A 523-amino-acid chain; its full sequence is NADH-ubiquinone oxidoreductase chain 2 (523 aa).

The next 14 helical transmembrane spans lie at 3–23, 30–50, 62–82, 110–130, 135–155, 170–190, 212–232, 246–266, 281–301, 306–326, 333–353, 386–406, 419–439, and 490–510; these read LFGV…IPAI, IILL…NNIG, VTTI…LVLL, SVLA…SSLI, LISM…LATI, FLLG…LYSF, IEIS…AAPF, VVTT…ILEF, LLLI…LAQY, LLTY…AINN, FLFY…ILVA, GLSL…VGFF, GNFF…AYYL, and LVIA…TPLL.

It belongs to the complex I subunit 2 family.

The protein resides in the mitochondrion inner membrane. It carries out the reaction a ubiquinone + NADH + 5 H(+)(in) = a ubiquinol + NAD(+) + 4 H(+)(out). In terms of biological role, core subunit of the mitochondrial membrane respiratory chain NADH dehydrogenase (Complex I) that is believed to belong to the minimal assembly required for catalysis. Complex I functions in the transfer of electrons from NADH to the respiratory chain. The immediate electron acceptor for the enzyme is believed to be ubiquinone. The sequence is that of NADH-ubiquinone oxidoreductase chain 2 from Rhizopus oryzae (Mucormycosis agent).